Reading from the N-terminus, the 124-residue chain is Fluoride-specific ion channel FluC (124 aa).

Helical transmembrane passes span 6 to 26 (LLIGVGGFFGAIFRYLISGIV), 37 to 57 (LAVNLIGSFILGFLLYCSLFA), 69 to 89 (TGFCGALTTFSTFSYETFVLV), and 92 to 112 (GLLFKALLNILINVVGCLIMV). Gly73 and Thr76 together coordinate Na(+).

It belongs to the fluoride channel Fluc/FEX (TC 1.A.43) family.

The protein resides in the cell membrane. The enzyme catalyses fluoride(in) = fluoride(out). With respect to regulation, na(+) is not transported, but it plays an essential structural role and its presence is essential for fluoride channel function. In terms of biological role, fluoride-specific ion channel. Important for reducing fluoride concentration in the cell, thus reducing its toxicity. The polypeptide is Fluoride-specific ion channel FluC (Methanocaldococcus jannaschii (strain ATCC 43067 / DSM 2661 / JAL-1 / JCM 10045 / NBRC 100440) (Methanococcus jannaschii)).